Consider the following 498-residue polypeptide: uncharacterized protein (498 aa).

ATP is bound at residue 329 to 336 (GNPGTGKS).

The protein localises to the secreted. It is found in the cell wall. This is an uncharacterized protein from Mycobacterium tuberculosis (strain CDC 1551 / Oshkosh).